A 128-amino-acid chain; its full sequence is Glycine cleavage system H protein (128 aa).

Residues 23 to 105 (VATVGISDHA…YEGGWLFKVQ (83 aa)) enclose the Lipoyl-binding domain. The residue at position 64 (lysine 64) is an N6-lipoyllysine.

It belongs to the GcvH family. The glycine cleavage system is composed of four proteins: P, T, L and H. It depends on (R)-lipoate as a cofactor.

The glycine cleavage system catalyzes the degradation of glycine. The H protein shuttles the methylamine group of glycine from the P protein to the T protein. The chain is Glycine cleavage system H protein from Alcanivorax borkumensis (strain ATCC 700651 / DSM 11573 / NCIMB 13689 / SK2).